We begin with the raw amino-acid sequence, 329 residues long: Endo-beta-N-acetylglucosaminidase F3 (329 aa).

A signal peptide (or 40, or 41) is located at residues 1–39 (MKKIFFAQCSILLLMLGSCSKMTEDMTPESVNKEASVKS). One can recognise a GH18 domain in the interval 48 to 329 (GVCIAYYITD…ANAVRDAVKN (282 aa)). An O-linked (Man...) threonine glycan is attached at Thr88. Glu167 functions as the Proton donor in the catalytic mechanism.

The protein belongs to the glycosyl hydrolase 18 family. As to quaternary structure, monomer. In terms of processing, carbohydrate at Thr-88 consists of (2-OMe)Man1-4GlcNAcU1-4GlcU1-4Glc1-4(2-OMe)GlcU1-4[(2-OMe)Rham1-2]Man.

The protein resides in the secreted. The enzyme catalyses an N(4)-(oligosaccharide-(1-&gt;3)-[oligosaccharide-(1-&gt;6)]-beta-D-Man-(1-&gt;4)-beta-D-GlcNAc-(1-&gt;4)-alpha-D-GlcNAc)-L-asparaginyl-[protein] + H2O = an oligosaccharide-(1-&gt;3)-[oligosaccharide-(1-&gt;6)]-beta-D-Man-(1-&gt;4)-D-GlcNAc + N(4)-(N-acetyl-beta-D-glucosaminyl)-L-asparaginyl-[protein]. Functionally, endohydrolysis of the di-N-acetylchitobiosyl unit in high-mannose glycopeptides and glycoproteins. Hydrolyzes bi- and triantennary glycans. The presence of a core-bound fucose greatly augments endo F3 activity on biantennary and, presumably, triantennary oligosaccharides. In Elizabethkingia meningoseptica (Chryseobacterium meningosepticum), this protein is Endo-beta-N-acetylglucosaminidase F3 (endOF3).